The chain runs to 456 residues: Phosphomethylpyrimidine synthase (456 aa).

Residues Asn80, Met109, Tyr139, His175, 195 to 197 (SRG), 236 to 239 (DSLR), and Glu275 each bind substrate. Position 279 (His279) interacts with Zn(2+). Residue Tyr302 participates in substrate binding. Zn(2+) is bound at residue His343. The [4Fe-4S] cluster site is built by Cys423, Cys426, and Cys431.

Belongs to the ThiC family. The cofactor is [4Fe-4S] cluster.

The enzyme catalyses 5-amino-1-(5-phospho-beta-D-ribosyl)imidazole + S-adenosyl-L-methionine = 4-amino-2-methyl-5-(phosphooxymethyl)pyrimidine + CO + 5'-deoxyadenosine + formate + L-methionine + 3 H(+). It functions in the pathway cofactor biosynthesis; thiamine diphosphate biosynthesis. In terms of biological role, catalyzes the synthesis of the hydroxymethylpyrimidine phosphate (HMP-P) moiety of thiamine from aminoimidazole ribotide (AIR) in a radical S-adenosyl-L-methionine (SAM)-dependent reaction. The polypeptide is Phosphomethylpyrimidine synthase (Prochlorococcus marinus (strain MIT 9301)).